The sequence spans 187 residues: Putative manganese efflux pump MntP (187 aa).

Helical transmembrane passes span L3–G23, L41–A61, T62–G82, L106–L128, A142–G162, and I167–G187.

Belongs to the MntP (TC 9.B.29) family.

The protein localises to the cell inner membrane. Functionally, probably functions as a manganese efflux pump. The protein is Putative manganese efflux pump MntP of Cronobacter sakazakii (strain ATCC BAA-894) (Enterobacter sakazakii).